A 114-amino-acid chain; its full sequence is Large ribosomal subunit protein uL22 (114 aa).

Belongs to the universal ribosomal protein uL22 family. As to quaternary structure, part of the 50S ribosomal subunit.

Its function is as follows. This protein binds specifically to 23S rRNA; its binding is stimulated by other ribosomal proteins, e.g. L4, L17, and L20. It is important during the early stages of 50S assembly. It makes multiple contacts with different domains of the 23S rRNA in the assembled 50S subunit and ribosome. In terms of biological role, the globular domain of the protein is located near the polypeptide exit tunnel on the outside of the subunit, while an extended beta-hairpin is found that lines the wall of the exit tunnel in the center of the 70S ribosome. In Bacillus licheniformis (strain ATCC 14580 / DSM 13 / JCM 2505 / CCUG 7422 / NBRC 12200 / NCIMB 9375 / NCTC 10341 / NRRL NRS-1264 / Gibson 46), this protein is Large ribosomal subunit protein uL22.